The primary structure comprises 64 residues: Cytochrome c oxidase subunit 5C (64 aa).

Residues 16 to 34 (VVKELVIGFSLGLVAGGFW) traverse the membrane as a helical segment.

The protein belongs to the cytochrome c oxidase subunit 5C family. In terms of assembly, sweet potato cytochrome C oxidase consists of at least seven different polypeptides species, subunits I, II, III, IV, Va, Vb, and Vc in order of MW.

It is found in the mitochondrion inner membrane. Its function is as follows. This protein is one of the nuclear-coded polypeptide chains of cytochrome c oxidase, the terminal oxidase in mitochondrial electron transport. This Ipomoea batatas (Sweet potato) protein is Cytochrome c oxidase subunit 5C (COX5C).